Reading from the N-terminus, the 261-residue chain is MWFLILFLALSLGRNDAAPPVQSRVVGGYNCEMNSQPWQVAVYYFGEYLCGGVLIDPSWVITAAHCATDNYQVWLGRNNLYEDEPFAQHRLVSQSFPHPGFNQDLIWNHTRQPGDDYSNDLMLLHLSQPADITDGVKVIDLPIEEPKVGSTCLASGWGSITPDGLELSDDLQCVNIDLLSNEKCVEAHKEEVTDLMLCAGEMDGGKDTCKGDSGGPLICNGVLQGITSWGFNPCGEPKKPGIYTKLIKFTPWIKEVMKENP.

A signal peptide spans 1–18 (MWFLILFLALSLGRNDAA). Residues 19–24 (PPVQSR) constitute a propeptide, activation peptide. One can recognise a Peptidase S1 domain in the interval 25–258 (VVGGYNCEMN…FTPWIKEVMK (234 aa)). 5 disulfides stabilise this stretch: Cys-31/Cys-173, Cys-50/Cys-66, Cys-152/Cys-219, Cys-184/Cys-198, and Cys-209/Cys-234. Catalysis depends on His-65, which acts as the Charge relay system. A glycan (N-linked (GlcNAc...) asparagine) is linked at Asn-108. Residue Asp-120 is the Charge relay system of the active site. Catalysis depends on Ser-213, which acts as the Charge relay system.

Belongs to the peptidase S1 family. Kallikrein subfamily. As to expression, high levels in pancreas, submaxillary and parotid glands, spleen, and kidney.

The enzyme catalyses Preferential cleavage of Arg-|-Xaa bonds in small molecule substrates. Highly selective action to release kallidin (lysyl-bradykinin) from kininogen involves hydrolysis of Met-|-Xaa or Leu-|-Xaa.. In Rattus norvegicus (Rat), this protein is Kallikrein-1 (Ngfg).